Here is a 170-residue protein sequence, read N- to C-terminus: MARMHSRKKGSSGSRPPVVDKLPEWCDVSKEELEKTIMTLHERGMSNAMIGLTLRDQYGVPNLKLILGKSLSSFLRDRNALPEIPEDLSNLMRKALRLRRHLLRAQPRGTVSDTSISRLPRTKDIHNKRALQLVESKIRRLVRYYKQVGRLPATWEYRPETAEIQISSKQ.

Residues M1–G10 show a composition bias toward basic residues. The tract at residues M1–D20 is disordered.

Belongs to the universal ribosomal protein uS15 family. In terms of assembly, part of the 30S ribosomal subunit.

The sequence is that of Small ribosomal subunit protein uS15 from Methanothrix thermoacetophila (strain DSM 6194 / JCM 14653 / NBRC 101360 / PT) (Methanosaeta thermophila).